We begin with the raw amino-acid sequence, 289 residues long: Nucleotide-binding protein MS1718 (289 aa).

8–15 contacts ATP; the sequence is GRSGAGKS. 56-59 provides a ligand contact to GTP; sequence DIRN.

This sequence belongs to the RapZ-like family.

In terms of biological role, displays ATPase and GTPase activities. This chain is Nucleotide-binding protein MS1718, found in Mannheimia succiniciproducens (strain KCTC 0769BP / MBEL55E).